A 433-amino-acid chain; its full sequence is 3-phosphoshikimate 1-carboxyvinyltransferase (433 aa).

Residues lysine 22, serine 23, and arginine 27 each contribute to the 3-phosphoshikimate site. Lysine 22 is a phosphoenolpyruvate binding site. Glycine 96 and arginine 130 together coordinate phosphoenolpyruvate. 3-phosphoshikimate is bound by residues serine 176, serine 177, glutamine 178, serine 204, aspartate 319, asparagine 342, and lysine 346. Glutamine 178 is a phosphoenolpyruvate binding site. Aspartate 319 acts as the Proton acceptor in catalysis. Residues arginine 350, arginine 394, and lysine 419 each coordinate phosphoenolpyruvate.

Belongs to the EPSP synthase family. In terms of assembly, monomer.

The protein localises to the cytoplasm. It catalyses the reaction 3-phosphoshikimate + phosphoenolpyruvate = 5-O-(1-carboxyvinyl)-3-phosphoshikimate + phosphate. It functions in the pathway metabolic intermediate biosynthesis; chorismate biosynthesis; chorismate from D-erythrose 4-phosphate and phosphoenolpyruvate: step 6/7. Functionally, catalyzes the transfer of the enolpyruvyl moiety of phosphoenolpyruvate (PEP) to the 5-hydroxyl of shikimate-3-phosphate (S3P) to produce enolpyruvyl shikimate-3-phosphate and inorganic phosphate. This is 3-phosphoshikimate 1-carboxyvinyltransferase from Actinobacillus succinogenes (strain ATCC 55618 / DSM 22257 / CCUG 43843 / 130Z).